We begin with the raw amino-acid sequence, 183 residues long: MKEKMSVKTIVAIGIGSAVFVILGRFVVIPTGIPNTNLETSYPFLALMSVVFGPVAGGLIGLIGHTLKDFTTYGSAWWSWIICSGIIGIIFGFAGRKMDLQHGEFTTNDMVRFNIFQAFGNIVVWGLIAPSLDILIYSEPASKVFTQGVFATVSNIVAVGIIGTLLMKAYASTRTKKGSLSKD.

The next 5 membrane-spanning stretches (helical) occupy residues 10-30 (IVAI…VVIP), 44-64 (FLAL…GLIG), 74-94 (GSAW…FGFA), 115-135 (IFQA…LDIL), and 147-167 (QGVF…TLLM).

This sequence belongs to the UPF0397 family.

Its subcellular location is the cell membrane. The protein is UPF0397 protein EF_2154 of Enterococcus faecalis (strain ATCC 700802 / V583).